A 479-amino-acid chain; its full sequence is Adenosylhomocysteinase (479 aa).

Substrate is bound by residues Thr-56, Asp-133, and Glu-199. 200–202 contributes to the NAD(+) binding site; that stretch reads TTT. Residues Lys-229 and Asp-233 each contribute to the substrate site. Residues Asn-234, 263–268, Glu-286, Asn-321, 342–344, and Asn-390 contribute to the NAD(+) site; these read GYGDVG and IGH.

Belongs to the adenosylhomocysteinase family. In terms of assembly, homotetramer. It depends on NAD(+) as a cofactor.

The catalysed reaction is S-adenosyl-L-homocysteine + H2O = L-homocysteine + adenosine. Its pathway is amino-acid biosynthesis; L-homocysteine biosynthesis; L-homocysteine from S-adenosyl-L-homocysteine: step 1/1. Adenosylhomocysteine is a competitive inhibitor of S-adenosyl-L-methionine-dependent methyl transferase reactions; therefore adenosylhomocysteinase may play a key role in the control of methylations via regulation of the intracellular concentration of adenosylhomocysteine. In Plasmodium chabaudi chabaudi, this protein is Adenosylhomocysteinase.